A 738-amino-acid chain; its full sequence is 1,4-alpha-glucan branching enzyme GlgB (738 aa).

D417 functions as the Nucleophile in the catalytic mechanism. Residue E472 is the Proton donor of the active site.

The protein belongs to the glycosyl hydrolase 13 family. GlgB subfamily. Monomer.

The catalysed reaction is Transfers a segment of a (1-&gt;4)-alpha-D-glucan chain to a primary hydroxy group in a similar glucan chain.. Its pathway is glycan biosynthesis; glycogen biosynthesis. Catalyzes the formation of the alpha-1,6-glucosidic linkages in glycogen by scission of a 1,4-alpha-linked oligosaccharide from growing alpha-1,4-glucan chains and the subsequent attachment of the oligosaccharide to the alpha-1,6 position. The chain is 1,4-alpha-glucan branching enzyme GlgB from Burkholderia pseudomallei (strain 668).